A 511-amino-acid polypeptide reads, in one-letter code: Sodium/hydrogen exchanger 9B1 (511 aa).

Residues 1–10 (MHTTESKDEH) show a composition bias toward basic and acidic residues. The segment at 1–41 (MHTTESKDEHLEDENFQTSTTPQSLIDPNSTAHEETKTVIS) is disordered. Residues 16-31 (FQTSTTPQSLIDPNST) are compositionally biased toward polar residues. 13 helical membrane passes run 67–87 (IITNGVILFVIWCTTWSVLGS), 95–115 (LFGLLIIFCSAIIGGKILQLI), 116–136 (RIPLVPPLPPLLGMLLAGFTI), 152–172 (WSSILRSTALTVILIRAGLGL), 187–207 (LAVGPCLMEASAAAVFSHFIM), 215–235 (FLLGFVLGAVSPAIVVPSMMV), 260–280 (VLAITGFNTCLSIVFSSGGIV), 284–304 (IASIKSVSISLLAGIVLGFFV), 337–357 (IGLHGTGGLFTLVLSFIAGTK), 368–388 (IITNVWDIFQPLLFGLVGAEV), 398–418 (IGIFVATLSLALCVRILVTYI), 431–451 (IFIALAWMPKATVQAVLGPLV), and 472–492 (VAFLAILITAPNGALLMGILG).

This sequence belongs to the monovalent cation:proton antiporter 1 (CPA1) transporter (TC 2.A.36) family.

The protein localises to the cell projection. Its subcellular location is the cilium. It localises to the flagellum membrane. In terms of biological role, sperm-specific Na(+)/H(+) exchanger involved in intracellular pH regulation of spermatozoa. Involved in sperm motility and fertility. In Macaca fascicularis (Crab-eating macaque), this protein is Sodium/hydrogen exchanger 9B1 (SLC9B1).